The following is a 1579-amino-acid chain: Pentafunctional AROM polypeptide (1579 aa).

Residues 1-391 (MKVELSKVPI…YGTSAHVVSD (391 aa)) are 3-dehydroquinate synthase. Residues 44–46 (DTN), 79–82 (EAHK), 110–112 (GGV), and aspartate 115 each bind NAD(+). Arginine 126 serves as a coordination point for 7-phospho-2-dehydro-3-deoxy-D-arabino-heptonate. 135–136 (TS) contributes to the NAD(+) binding site. 2 residues coordinate 7-phospho-2-dehydro-3-deoxy-D-arabino-heptonate: aspartate 142 and lysine 148. Residue lysine 157 coordinates NAD(+). A 7-phospho-2-dehydro-3-deoxy-D-arabino-heptonate-binding site is contributed by asparagine 158. NAD(+) is bound by residues 175–178 (WLET) and asparagine 186. Glutamate 190 contributes to the Zn(2+) binding site. 7-phospho-2-dehydro-3-deoxy-D-arabino-heptonate-binding positions include 190–193 (EVIK) and lysine 257. Glutamate 267 serves as the catalytic Proton acceptor; for 3-dehydroquinate synthase activity. Residues 271 to 275 (RNLLN) and histidine 278 each bind 7-phospho-2-dehydro-3-deoxy-D-arabino-heptonate. Histidine 278 is a Zn(2+) binding site. Histidine 282 (proton acceptor; for 3-dehydroquinate synthase activity) is an active-site residue. 2 residues coordinate 7-phospho-2-dehydro-3-deoxy-D-arabino-heptonate: histidine 294 and lysine 363. Position 294 (histidine 294) interacts with Zn(2+). Residues 404–862 (VYPFKTLENG…WDVLHTQLGA (459 aa)) form an EPSP synthase region. Cysteine 844 functions as the For EPSP synthase activity in the catalytic mechanism. The interval 881–1070 (SIVIIGMRAA…IPTNRSSFVC (190 aa)) is shikimate kinase. 886–893 (GMRAAGKT) is a binding site for ATP. The tract at residues 1071-1283 (LTFDDLAAHK…SAPGQLTLSQ (213 aa)) is 3-dehydroquinase. The Proton acceptor; for 3-dehydroquinate dehydratase activity role is filled by histidine 1188. The active-site Schiff-base intermediate with substrate; for 3-dehydroquinate dehydratase activity is the lysine 1217. A shikimate dehydrogenase region spans residues 1296-1579 (AKNFYVVGSP…IYSAVTEEQA (284 aa)).

This sequence in the N-terminal section; belongs to the sugar phosphate cyclases superfamily. Dehydroquinate synthase family. In the 2nd section; belongs to the EPSP synthase family. It in the 3rd section; belongs to the shikimate kinase family. The protein in the 4th section; belongs to the type-I 3-dehydroquinase family. This sequence in the C-terminal section; belongs to the shikimate dehydrogenase family. In terms of assembly, homodimer. It depends on Zn(2+) as a cofactor.

The protein localises to the cytoplasm. The enzyme catalyses 7-phospho-2-dehydro-3-deoxy-D-arabino-heptonate = 3-dehydroquinate + phosphate. It catalyses the reaction 3-dehydroquinate = 3-dehydroshikimate + H2O. It carries out the reaction shikimate + NADP(+) = 3-dehydroshikimate + NADPH + H(+). The catalysed reaction is shikimate + ATP = 3-phosphoshikimate + ADP + H(+). The enzyme catalyses 3-phosphoshikimate + phosphoenolpyruvate = 5-O-(1-carboxyvinyl)-3-phosphoshikimate + phosphate. It functions in the pathway metabolic intermediate biosynthesis; chorismate biosynthesis; chorismate from D-erythrose 4-phosphate and phosphoenolpyruvate: step 2/7. It participates in metabolic intermediate biosynthesis; chorismate biosynthesis; chorismate from D-erythrose 4-phosphate and phosphoenolpyruvate: step 3/7. Its pathway is metabolic intermediate biosynthesis; chorismate biosynthesis; chorismate from D-erythrose 4-phosphate and phosphoenolpyruvate: step 4/7. The protein operates within metabolic intermediate biosynthesis; chorismate biosynthesis; chorismate from D-erythrose 4-phosphate and phosphoenolpyruvate: step 5/7. It functions in the pathway metabolic intermediate biosynthesis; chorismate biosynthesis; chorismate from D-erythrose 4-phosphate and phosphoenolpyruvate: step 6/7. Its function is as follows. The AROM polypeptide catalyzes 5 consecutive enzymatic reactions in prechorismate polyaromatic amino acid biosynthesis. This is Pentafunctional AROM polypeptide from Lachancea thermotolerans (strain ATCC 56472 / CBS 6340 / NRRL Y-8284) (Yeast).